Reading from the N-terminus, the 211-residue chain is Thiamine-phosphate synthase (211 aa).

4-amino-2-methyl-5-(diphosphooxymethyl)pyrimidine is bound by residues 37–41 and N69; that span reads QLRIK. D70 and D89 together coordinate Mg(2+). S108 contacts 4-amino-2-methyl-5-(diphosphooxymethyl)pyrimidine. Residue 134 to 136 coordinates 2-[(2R,5Z)-2-carboxy-4-methylthiazol-5(2H)-ylidene]ethyl phosphate; the sequence is TQT. K137 lines the 4-amino-2-methyl-5-(diphosphooxymethyl)pyrimidine pocket. Residues G166 and 186–187 each bind 2-[(2R,5Z)-2-carboxy-4-methylthiazol-5(2H)-ylidene]ethyl phosphate; that span reads VS.

It belongs to the thiamine-phosphate synthase family. Mg(2+) serves as cofactor.

It carries out the reaction 2-[(2R,5Z)-2-carboxy-4-methylthiazol-5(2H)-ylidene]ethyl phosphate + 4-amino-2-methyl-5-(diphosphooxymethyl)pyrimidine + 2 H(+) = thiamine phosphate + CO2 + diphosphate. It catalyses the reaction 2-(2-carboxy-4-methylthiazol-5-yl)ethyl phosphate + 4-amino-2-methyl-5-(diphosphooxymethyl)pyrimidine + 2 H(+) = thiamine phosphate + CO2 + diphosphate. The catalysed reaction is 4-methyl-5-(2-phosphooxyethyl)-thiazole + 4-amino-2-methyl-5-(diphosphooxymethyl)pyrimidine + H(+) = thiamine phosphate + diphosphate. The protein operates within cofactor biosynthesis; thiamine diphosphate biosynthesis; thiamine phosphate from 4-amino-2-methyl-5-diphosphomethylpyrimidine and 4-methyl-5-(2-phosphoethyl)-thiazole: step 1/1. Its function is as follows. Condenses 4-methyl-5-(beta-hydroxyethyl)thiazole monophosphate (THZ-P) and 2-methyl-4-amino-5-hydroxymethyl pyrimidine pyrophosphate (HMP-PP) to form thiamine monophosphate (TMP). This is Thiamine-phosphate synthase from Salmonella dublin (strain CT_02021853).